The primary structure comprises 284 residues: Tropomyosin Per a 7.0101 (284 aa).

A coiled-coil region spans residues 22-266; it reads ALLCEQQARD…EDELVHEKEK (245 aa).

Belongs to the tropomyosin family. Homodimer.

In terms of biological role, tropomyosin, in association with the troponin complex, plays a central role in the calcium dependent regulation of muscle contraction. The chain is Tropomyosin Per a 7.0101 from Periplaneta americana (American cockroach).